The sequence spans 301 residues: MNSPLPDVALTEVSSALIALDWVGMQGVEVPLTLGEQGATHPVHAYADLQVDLTDPSVKGIHMSRLYRLLDGFAEHQVLTPETLSALLEAMVESHVDCHSSGARITLTFNLLCRRPALVTEGLSGWKSYPVKLEAVWRAGRLCLDVSADITYSSTCPCSAALSRQLLEEAFVARFGRQSFVDPMQVAAWLRENASYATPHSQRSVATVQVRVAEQATEMGLMALIDTVEQALGTPVQTAVKRADEQAFARLNGQNLMYVEDAARKIQQALEGRYPASSVSVRHFESLHPHDAAAQTSSYLS.

The protein belongs to the GTP cyclohydrolase IV family.

The catalysed reaction is GTP + H2O = 7,8-dihydroneopterin 3'-triphosphate + formate + H(+). The protein operates within cofactor biosynthesis; 7,8-dihydroneopterin triphosphate biosynthesis; 7,8-dihydroneopterin triphosphate from GTP: step 1/1. Converts GTP to 7,8-dihydroneopterin triphosphate. The sequence is that of GTP cyclohydrolase FolE2 from Pseudomonas syringae pv. tomato (strain ATCC BAA-871 / DC3000).